Consider the following 158-residue polypeptide: Ribosome-binding factor A (158 aa).

The disordered stretch occupies residues 130-158; that stretch reads TAQYAGDADPYKHDDEAEAEGDEFESDEE. Acidic residues predominate over residues 145–158; it reads EAEAEGDEFESDEE.

The protein belongs to the RbfA family. As to quaternary structure, monomer. Binds 30S ribosomal subunits, but not 50S ribosomal subunits or 70S ribosomes.

It is found in the cytoplasm. In terms of biological role, one of several proteins that assist in the late maturation steps of the functional core of the 30S ribosomal subunit. Associates with free 30S ribosomal subunits (but not with 30S subunits that are part of 70S ribosomes or polysomes). Required for efficient processing of 16S rRNA. May interact with the 5'-terminal helix region of 16S rRNA. The sequence is that of Ribosome-binding factor A from Bifidobacterium longum subsp. infantis (strain ATCC 15697 / DSM 20088 / JCM 1222 / NCTC 11817 / S12).